The sequence spans 418 residues: UDP-N-acetylglucosamine 1-carboxyvinyltransferase (418 aa).

Residue 22-23 participates in phosphoenolpyruvate binding; sequence KN. Position 92 (R92) interacts with UDP-N-acetyl-alpha-D-glucosamine. C116 acts as the Proton donor in catalysis. The residue at position 116 (C116) is a 2-(S-cysteinyl)pyruvic acid O-phosphothioketal. Residues 121–125, D305, and L327 contribute to the UDP-N-acetyl-alpha-D-glucosamine site; that span reads RPIDL.

The protein belongs to the EPSP synthase family. MurA subfamily.

Its subcellular location is the cytoplasm. The catalysed reaction is phosphoenolpyruvate + UDP-N-acetyl-alpha-D-glucosamine = UDP-N-acetyl-3-O-(1-carboxyvinyl)-alpha-D-glucosamine + phosphate. It participates in cell wall biogenesis; peptidoglycan biosynthesis. Cell wall formation. Adds enolpyruvyl to UDP-N-acetylglucosamine. The polypeptide is UDP-N-acetylglucosamine 1-carboxyvinyltransferase (Campylobacter jejuni (strain RM1221)).